The following is a 181-amino-acid chain: Crossover junction endodeoxyribonuclease RuvC (181 aa).

Residues D7, E67, and D139 contribute to the active site. Mg(2+)-binding residues include D7, E67, and D139.

This sequence belongs to the RuvC family. In terms of assembly, homodimer which binds Holliday junction (HJ) DNA. The HJ becomes 2-fold symmetrical on binding to RuvC with unstacked arms; it has a different conformation from HJ DNA in complex with RuvA. In the full resolvosome a probable DNA-RuvA(4)-RuvB(12)-RuvC(2) complex forms which resolves the HJ. Mg(2+) is required as a cofactor.

The protein resides in the cytoplasm. The catalysed reaction is Endonucleolytic cleavage at a junction such as a reciprocal single-stranded crossover between two homologous DNA duplexes (Holliday junction).. In terms of biological role, the RuvA-RuvB-RuvC complex processes Holliday junction (HJ) DNA during genetic recombination and DNA repair. Endonuclease that resolves HJ intermediates. Cleaves cruciform DNA by making single-stranded nicks across the HJ at symmetrical positions within the homologous arms, yielding a 5'-phosphate and a 3'-hydroxyl group; requires a central core of homology in the junction. The consensus cleavage sequence is 5'-(A/T)TT(C/G)-3'. Cleavage occurs on the 3'-side of the TT dinucleotide at the point of strand exchange. HJ branch migration catalyzed by RuvA-RuvB allows RuvC to scan DNA until it finds its consensus sequence, where it cleaves and resolves the cruciform DNA. The polypeptide is Crossover junction endodeoxyribonuclease RuvC (Ralstonia pickettii (strain 12J)).